The primary structure comprises 436 residues: GTPase Der (436 aa).

2 EngA-type G domains span residues 4-167 (PVVA…KNLP) and 176-351 (VQFC…ENHA). Residues 10 to 17 (GRPNVGKS), 57 to 61 (DTGGI), 119 to 122 (NKLD), 182 to 189 (GRPNVGKS), 229 to 233 (DTAGM), and 294 to 297 (NKWD) each bind GTP. Residues 352–436 (MRVQTNILND…PIKIFARARK (85 aa)) form the KH-like domain.

The protein belongs to the TRAFAC class TrmE-Era-EngA-EngB-Septin-like GTPase superfamily. EngA (Der) GTPase family. Associates with the 50S ribosomal subunit.

GTPase that plays an essential role in the late steps of ribosome biogenesis. This chain is GTPase Der, found in Bacillus pumilus (strain SAFR-032).